Consider the following 290-residue polypeptide: MLRRQARERREYLYRKAQELQDSQLQQKRQIIKQALAQGKPLPKELAEDESLQKDFRYDQSLKESEEADDLQVDDEYAATSGIMDPRIIVTTSRDPSTRLSQFAKEIKLLFPNAVRLNRGNYVMPNLVDACKKSGTTDLVVLHEHRGVPTSLTISHFPHGPTAQFSLHNVVMRHDIINAGNQSEVNPHLIFDNFTTALGKRVVCILKHLFNAGPKKDSERVITFANRGDFISVRQHVYVRTREGVEIAEVGPRFEMRLFELRLGTLENKDADVEWQLRRFIRTANKKDYL.

Residues 86–267 (PRIIVTTSRD…LFELRLGTLE (182 aa)) enclose the Brix domain.

As to quaternary structure, component of a heterotrimeric complex containing IMP3, IMP4 and MPP10. Interacts with MPP10. Component of the ribosomal small subunit (SSU) processome composed of at least 40 protein subunits and snoRNA U3.

It localises to the nucleus. The protein localises to the nucleolus. Its function is as follows. Required for the early cleavages at sites A0, A1 and A2 during 18S ribosomal pre-RNA processing. In Saccharomyces cerevisiae (strain ATCC 204508 / S288c) (Baker's yeast), this protein is U3 small nucleolar ribonucleoprotein protein IMP4 (IMP4).